Here is a 370-residue protein sequence, read N- to C-terminus: Subtilisin-like protease (370 aa).

The signal sequence occupies residues 1 to 17 (MIASIVFFIVLVDGVAT). Catalysis depends on charge relay system residues Asp-13, His-35, and Ser-190. One can recognise a Peptidase S8 domain in the interval 18 to 261 (GSPNALVTDF…FGEVSPSRLE (244 aa)). Residues 240–370 (RVTDRWTHRN…TTEGTCHGIR (131 aa)) enclose the P/Homo B domain.

It belongs to the peptidase S8 family.

The chain is Subtilisin-like protease (ORF47) from Ictalurid herpesvirus 1 (strain Auburn) (IcHV-1).